Here is a 455-residue protein sequence, read N- to C-terminus: Catalase-like protein (455 aa).

The tract at residues 1 to 25 (MSQQDKKLTGVFGHPVSDRENSMTA) is disordered.

This sequence belongs to the catalase family.

In terms of biological role, catalytically inactive. The sequence is that of Catalase-like protein (katB) from Staphylococcus aureus.